Reading from the N-terminus, the 242-residue chain is Phosphoribosylaminoimidazole-succinocarboxamide synthase (242 aa).

The protein belongs to the SAICAR synthetase family.

It catalyses the reaction 5-amino-1-(5-phospho-D-ribosyl)imidazole-4-carboxylate + L-aspartate + ATP = (2S)-2-[5-amino-1-(5-phospho-beta-D-ribosyl)imidazole-4-carboxamido]succinate + ADP + phosphate + 2 H(+). It participates in purine metabolism; IMP biosynthesis via de novo pathway; 5-amino-1-(5-phospho-D-ribosyl)imidazole-4-carboxamide from 5-amino-1-(5-phospho-D-ribosyl)imidazole-4-carboxylate: step 1/2. This chain is Phosphoribosylaminoimidazole-succinocarboxamide synthase, found in Prochlorococcus marinus (strain MIT 9303).